The primary structure comprises 427 residues: Glutamate-1-semialdehyde 2,1-aminomutase (427 aa).

Lysine 265 carries the post-translational modification N6-(pyridoxal phosphate)lysine.

The protein belongs to the class-III pyridoxal-phosphate-dependent aminotransferase family. HemL subfamily. In terms of assembly, homodimer. It depends on pyridoxal 5'-phosphate as a cofactor.

Its subcellular location is the cytoplasm. The catalysed reaction is (S)-4-amino-5-oxopentanoate = 5-aminolevulinate. Its pathway is porphyrin-containing compound metabolism; protoporphyrin-IX biosynthesis; 5-aminolevulinate from L-glutamyl-tRNA(Glu): step 2/2. This Pseudomonas aeruginosa (strain UCBPP-PA14) protein is Glutamate-1-semialdehyde 2,1-aminomutase.